Here is a 436-residue protein sequence, read N- to C-terminus: MGQESTAAAAVVPAEFKLVGHKNFVRSNPMSDHFPVHRFHHVEFWCGDATNTSRRFSWGLGMPLVAKSDLSTGNSAHASYLLRSGELSFVFTAPYSPSLAEPSSASIPTFSFSDHRAFTSSHGLAVRAVAIQVDSASSAYSAAVSRGAKPVSPPVVLADCETAIAEVHLYGDTVLRFVSCGSGADGWFLPGFEVVGDGVSCQELDYGIRRLDHAVGNVPKLEPVVDYLKKFTGFHEFAEFTAEDVGTAESGLNSVVLANNNENVLFPLNEPVYGTKRKSQIQTYLDHNEGAGVQHLALITEDIFRTLREMRKRSEVGGFEFMPSPPPTYYRNLKSRAGDVLSDEQIEECEKLGILIDRDDQGTLLQIFTKPVGDRPTLFIEIIQRVGCMMKDEEGKMYQKGGCGGFGKGNFSELFKSIEEYEKMLESKLVTKTAMA.

2 VOC domains span residues 38 to 194 (RFHH…GFEV) and 210 to 370 (RLDH…IFTK). Fe cation is bound by residues His-213, His-295, and Glu-381.

It belongs to the 4HPPD family. Fe cation serves as cofactor.

The protein localises to the cytoplasm. It carries out the reaction 3-(4-hydroxyphenyl)pyruvate + O2 = homogentisate + CO2. Its pathway is amino-acid degradation; L-phenylalanine degradation; acetoacetate and fumarate from L-phenylalanine: step 3/6. The protein operates within cofactor biosynthesis; prenylquinone biosynthesis. In Plectranthus scutellarioides (Coleus), this protein is 4-hydroxyphenylpyruvate dioxygenase.